Reading from the N-terminus, the 365-residue chain is Pre-mRNA-splicing factor srp2 (365 aa).

2 consecutive RRM domains span residues 6–69 (LFVG…RIVV) and 100–166 (LIVE…AVTL). The interval 166 to 365 (LREDPDAANE…SAEGQVAAEW (200 aa)) is disordered. Residues 184–194 (FRSRSPPARRR) are compositionally biased toward basic residues. Ser186, Ser188, Ser276, Ser294, Ser296, Ser298, and Ser308 each carry phosphoserine. Positions 195-307 (YRDDYRRGGD…SPRRDREENR (113 aa)) are enriched in basic and acidic residues. A compositionally biased stretch (low complexity) spans 316–332 (SYSAAPEASMESSAPTE). Polar residues predominate over residues 341-353 (EEQQPLQNHSDVG).

Belongs to the splicing factor SR family. In terms of processing, extensively phosphorylated on serine residues in the RS domain.

The protein localises to the nucleus. Has a role in pre-mRNA splicing where it is involved in spliceosome assembly. The polypeptide is Pre-mRNA-splicing factor srp2 (srp2) (Schizosaccharomyces pombe (strain 972 / ATCC 24843) (Fission yeast)).